The chain runs to 547 residues: Chaperonin GroEL 2 (547 aa).

ATP is bound by residues 30–33, Lys51, 87–91, Gly415, and Asp496; these read TLGP and DGTTT.

This sequence belongs to the chaperonin (HSP60) family. Forms a cylinder of 14 subunits composed of two heptameric rings stacked back-to-back. Interacts with the co-chaperonin GroES.

Its subcellular location is the cytoplasm. It carries out the reaction ATP + H2O + a folded polypeptide = ADP + phosphate + an unfolded polypeptide.. Its function is as follows. Together with its co-chaperonin GroES, plays an essential role in assisting protein folding. The GroEL-GroES system forms a nano-cage that allows encapsulation of the non-native substrate proteins and provides a physical environment optimized to promote and accelerate protein folding. This Rhodopseudomonas palustris (strain ATCC BAA-98 / CGA009) protein is Chaperonin GroEL 2.